A 155-amino-acid chain; its full sequence is SsrA-binding protein (155 aa).

This sequence belongs to the SmpB family.

It is found in the cytoplasm. Functionally, required for rescue of stalled ribosomes mediated by trans-translation. Binds to transfer-messenger RNA (tmRNA), required for stable association of tmRNA with ribosomes. tmRNA and SmpB together mimic tRNA shape, replacing the anticodon stem-loop with SmpB. tmRNA is encoded by the ssrA gene; the 2 termini fold to resemble tRNA(Ala) and it encodes a 'tag peptide', a short internal open reading frame. During trans-translation Ala-aminoacylated tmRNA acts like a tRNA, entering the A-site of stalled ribosomes, displacing the stalled mRNA. The ribosome then switches to translate the ORF on the tmRNA; the nascent peptide is terminated with the 'tag peptide' encoded by the tmRNA and targeted for degradation. The ribosome is freed to recommence translation, which seems to be the essential function of trans-translation. This Bacillus cereus (strain ATCC 10987 / NRS 248) protein is SsrA-binding protein.